A 115-amino-acid polypeptide reads, in one-letter code: Anamorsin homolog 1 (115 aa).

The segment at 30–115 (VKEATKGEDC…KVKLNLTDDI (86 aa)) is disordered. [2Fe-2S] cluster is bound by residues cysteine 39, cysteine 46, cysteine 49, and cysteine 51. Residues 39 to 51 (CTTRRRACKNCTC) are fe-S binding site A. Positions 77, 80, 88, and 91 each coordinate [4Fe-4S] cluster. 2 short sequence motifs (cx2C motif) span residues 77–80 (CGNC) and 88–91 (CATC). The tract at residues 77–91 (CGNCAKGDAFRCATC) is fe-S binding site B.

It belongs to the anamorsin family. In terms of assembly, monomer. It depends on [2Fe-2S] cluster as a cofactor. [4Fe-4S] cluster serves as cofactor.

The protein localises to the cytoplasm. The protein resides in the mitochondrion intermembrane space. Functionally, component of the cytosolic iron-sulfur (Fe-S) protein assembly (CIA) machinery. Required for the maturation of extramitochondrial Fe-S proteins. Part of an electron transfer chain functioning in an early step of cytosolic Fe-S biogenesis, facilitating the de novo assembly of a [4Fe-4S] cluster on the cytosolic Fe-S scaffold complex. Electrons are transferred from NADPH via a FAD- and FMN-containing diflavin oxidoreductase. Together with the diflavin oxidoreductase, also required for the assembly of the diferric tyrosyl radical cofactor of ribonucleotide reductase (RNR), probably by providing electrons for reduction during radical cofactor maturation in the catalytic small subunit. The chain is Anamorsin homolog 1 from Trypanosoma cruzi (strain CL Brener).